A 117-amino-acid chain; its full sequence is Large ribosomal subunit protein bL20 (117 aa).

Belongs to the bacterial ribosomal protein bL20 family.

Functionally, binds directly to 23S ribosomal RNA and is necessary for the in vitro assembly process of the 50S ribosomal subunit. It is not involved in the protein synthesizing functions of that subunit. The chain is Large ribosomal subunit protein bL20 from Histophilus somni (strain 129Pt) (Haemophilus somnus).